A 426-amino-acid chain; its full sequence is Enolase (426 aa).

Gly41 is a phosphoenolpyruvate binding site. A Mg(2+)-binding site is contributed by Ser43. Glu165 is a binding site for phosphoenolpyruvate. Residues Glu165 and Glu206 each coordinate (2R)-2-phosphoglycerate. The active-site Proton donor is Glu206. 3 residues coordinate Mg(2+): Asp243, Glu286, and Asp313. Phosphoenolpyruvate contacts are provided by Asp313, Lys338, Arg367, Ser368, and Lys389. The (2R)-2-phosphoglycerate site is built by Lys338, Arg367, and Ser368. Catalysis depends on Lys338, which acts as the Proton acceptor.

The protein belongs to the enolase family. In terms of assembly, homodimer. Requires Mg(2+) as cofactor.

Its subcellular location is the cytoplasm. The protein resides in the secreted. It localises to the cell surface. It carries out the reaction (2R)-2-phosphoglycerate = phosphoenolpyruvate + H2O. Its pathway is carbohydrate degradation; glycolysis; pyruvate from D-glyceraldehyde 3-phosphate: step 4/5. Its function is as follows. Catalyzes the reversible conversion of 2-phosphoglycerate (2-PG) into phosphoenolpyruvate (PEP). It is essential for the degradation of carbohydrates via glycolysis. The protein is Enolase of Chloroflexus aurantiacus (strain ATCC 29366 / DSM 635 / J-10-fl).